The sequence spans 215 residues: MOB kinase activator-like 1B (215 aa).

The interval 1-29 (MSLFGLGSRNQKTFRPKKSAPTGSKGAQL) is disordered. Zn(2+) contacts are provided by C80, C85, H162, and H167.

The protein belongs to the MOB1/phocein family. As to expression, constitutively expressed with higher expression in roots, flowers and pods than in leaves and stems.

It is found in the cytoplasm. The protein localises to the cytoskeleton. The protein resides in the phragmoplast. The polypeptide is MOB kinase activator-like 1B (Medicago sativa subsp. falcata (Sickle medic)).